The sequence spans 175 residues: Thermoresistant gluconokinase (175 aa).

ATP is bound at residue 15–22 (GVSGSGKS).

The protein belongs to the gluconokinase GntK/GntV family.

It catalyses the reaction D-gluconate + ATP = 6-phospho-D-gluconate + ADP + H(+). It functions in the pathway carbohydrate acid metabolism; D-gluconate degradation. This chain is Thermoresistant gluconokinase (gntK), found in Escherichia coli (strain K12).